The sequence spans 203 residues: Putative 3-methyladenine DNA glycosylase (203 aa).

This sequence belongs to the DNA glycosylase MPG family.

This is Putative 3-methyladenine DNA glycosylase from Desulfitobacterium hafniense (strain Y51).